Consider the following 190-residue polypeptide: Capsid protein (190 aa).

M1 carries the N-acetylmethionine; by host modification.

This sequence belongs to the tymoviruses capsid protein family.

The protein resides in the virion. Self-assembles to form a T=3 icosahedral capsid composed of 180 copies of the capsid protein. The capsid encapsulates the single-stranded RNA genome. The polypeptide is Capsid protein (Atropa belladonna (Belladonna)).